The chain runs to 374 residues: Chaperone protein DnaJ (374 aa).

In terms of domain architecture, J spans 4-69; the sequence is DFYETLCVSR…QKRAAYDRFG (66 aa). The segment at 131–210 adopts a CR-type zinc-finger fold; sequence GKTAQIRVPT…CSGQGRLTEE (80 aa). Residues Cys-144, Cys-147, Cys-161, Cys-164, Cys-184, Cys-187, Cys-198, and Cys-201 each coordinate Zn(2+). 4 CXXCXGXG motif repeats span residues 144–151, 161–168, 184–191, and 198–205; these read CDECAGSG, CPMCHGAG, CPQCQGRG, and CRKCSGQG.

It belongs to the DnaJ family. Homodimer. It depends on Zn(2+) as a cofactor.

It is found in the cytoplasm. Functionally, participates actively in the response to hyperosmotic and heat shock by preventing the aggregation of stress-denatured proteins and by disaggregating proteins, also in an autonomous, DnaK-independent fashion. Unfolded proteins bind initially to DnaJ; upon interaction with the DnaJ-bound protein, DnaK hydrolyzes its bound ATP, resulting in the formation of a stable complex. GrpE releases ADP from DnaK; ATP binding to DnaK triggers the release of the substrate protein, thus completing the reaction cycle. Several rounds of ATP-dependent interactions between DnaJ, DnaK and GrpE are required for fully efficient folding. Also involved, together with DnaK and GrpE, in the DNA replication of plasmids through activation of initiation proteins. The polypeptide is Chaperone protein DnaJ (Chelativorans sp. (strain BNC1)).